Here is a 355-residue protein sequence, read N- to C-terminus: Protein RecA (355 aa).

An ATP-binding site is contributed by 69-76 (GPESSGKT). Residues 329-355 (AYGLPDREETKREETAQIPDTEKTKDV) are disordered.

It belongs to the RecA family.

It localises to the cytoplasm. Functionally, can catalyze the hydrolysis of ATP in the presence of single-stranded DNA, the ATP-dependent uptake of single-stranded DNA by duplex DNA, and the ATP-dependent hybridization of homologous single-stranded DNAs. It interacts with LexA causing its activation and leading to its autocatalytic cleavage. This Desulfotalea psychrophila (strain LSv54 / DSM 12343) protein is Protein RecA.